Reading from the N-terminus, the 426-residue chain is Glutamate-1-semialdehyde 2,1-aminomutase (426 aa).

Lysine 265 is subject to N6-(pyridoxal phosphate)lysine.

This sequence belongs to the class-III pyridoxal-phosphate-dependent aminotransferase family. HemL subfamily. Pyridoxal 5'-phosphate is required as a cofactor.

The protein localises to the cytoplasm. The enzyme catalyses (S)-4-amino-5-oxopentanoate = 5-aminolevulinate. It participates in porphyrin-containing compound metabolism; protoporphyrin-IX biosynthesis; 5-aminolevulinate from L-glutamyl-tRNA(Glu): step 2/2. The chain is Glutamate-1-semialdehyde 2,1-aminomutase from Hyperthermus butylicus (strain DSM 5456 / JCM 9403 / PLM1-5).